The chain runs to 506 residues: BTB/POZ domain and ankyrin repeat-containing protein NPR5 (506 aa).

The 109-residue stretch at serine 23–proline 131 folds into the BTB domain. The C2HC NPR-type zinc-finger motif lies at arginine 137–alanine 151. 4 residues coordinate Zn(2+): cysteine 140, cysteine 145, histidine 147, and cysteine 150. 4 ANK repeats span residues histidine 278 to leucine 306, aspartate 307 to histidine 337, alanine 342 to valine 371, and aspartate 375 to leucine 409. The segment at lysine 481–proline 506 is disordered.

The protein belongs to the plant 'ANKYRIN-BTB/POZ' family. 'NOOT-BOP-COCH-like' (NBCL) subfamily. As to quaternary structure, homodimer. Interacts with TGAL5, TGAL7, TGAL8 and TGAL11.

The protein resides in the nucleus. It is found in the cytoplasm. Its pathway is protein modification; protein ubiquitination. In terms of biological role, may act as a substrate-specific adapter of an E3 ubiquitin-protein ligase complex (CUL3-RBX1-BTB) which mediates the ubiquitination and subsequent proteasomal degradation of target proteins. Transcriptional co-regulator involved in the promotion of leaf and floral meristem fate and determinacy. Required for the abscission of senescent organs, probably by regulating the cell wall disorganization in abscission zones (AZs, e.g. pulvini at the base of leaves). Maybe involved in defense response against pathogens. The polypeptide is BTB/POZ domain and ankyrin repeat-containing protein NPR5 (Oryza sativa subsp. japonica (Rice)).